The chain runs to 141 residues: Large-conductance mechanosensitive channel (141 aa).

Transmembrane regions (helical) follow at residues 16 to 36 (VIDLAVGVIIGGAFGKIVDSL) and 83 to 103 (GAFINTTIDFLIIALAIFVAI).

It belongs to the MscL family. In terms of assembly, homopentamer.

It is found in the cell inner membrane. Channel that opens in response to stretch forces in the membrane lipid bilayer. May participate in the regulation of osmotic pressure changes within the cell. The sequence is that of Large-conductance mechanosensitive channel from Azoarcus sp. (strain BH72).